A 165-amino-acid chain; its full sequence is UPF0179 protein Igni_1272 (165 aa).

It belongs to the UPF0179 family.

The protein is UPF0179 protein Igni_1272 of Ignicoccus hospitalis (strain KIN4/I / DSM 18386 / JCM 14125).